The sequence spans 287 residues: Membrane protein insertase YidC 2 (287 aa).

The first 26 residues, 1–26 (MKKKKRFKQKLLIASLVIGLMAVLSG), serve as a signal peptide directing secretion. Cys-27 carries N-palmitoyl cysteine lipidation. Cys-27 is lipidated: S-diacylglycerol cysteine. 5 helical membrane-spanning segments follow: residues 65–85 (YAVG…PLMI), 135–155 (MMGC…YQAI), 178–198 (YILP…SMMG), 207–224 (AMIV…GITL), and 228–250 (LALY…NNPF).

This sequence belongs to the OXA1/ALB3/YidC family. Type 2 subfamily.

The protein resides in the cell membrane. Its function is as follows. Required for the insertion and/or proper folding and/or complex formation of integral membrane proteins into the membrane. Involved in integration of membrane proteins that insert both dependently and independently of the Sec translocase complex, as well as at least some lipoproteins. The sequence is that of Membrane protein insertase YidC 2 from Listeria monocytogenes serovar 1/2a (strain ATCC BAA-679 / EGD-e).